A 316-amino-acid chain; its full sequence is L-lactate dehydrogenase (316 aa).

NAD(+)-binding positions include M14, 14 to 150 (MIGG…IIGL), I15, D35, Y67, G81, F82, V125, N127, and L150. R95 is a binding site for substrate. R158 and H182 together coordinate substrate. The active-site Proton acceptor is H182.

The protein belongs to the LDH/MDH superfamily. LDH family. In terms of assembly, homotetramer.

The catalysed reaction is (S)-lactate + NAD(+) = pyruvate + NADH + H(+). It functions in the pathway fermentation; pyruvate fermentation to lactate; (S)-lactate from pyruvate: step 1/1. The polypeptide is L-lactate dehydrogenase (Plasmodium falciparum (isolate CDC / Honduras)).